Consider the following 164-residue polypeptide: Crossover junction endodeoxyribonuclease RuvC (164 aa).

Residues D7, E67, and D139 contribute to the active site. 3 residues coordinate Mg(2+): D7, E67, and D139.

The protein belongs to the RuvC family. In terms of assembly, homodimer which binds Holliday junction (HJ) DNA. The HJ becomes 2-fold symmetrical on binding to RuvC with unstacked arms; it has a different conformation from HJ DNA in complex with RuvA. In the full resolvosome a probable DNA-RuvA(4)-RuvB(12)-RuvC(2) complex forms which resolves the HJ. Mg(2+) serves as cofactor.

It is found in the cytoplasm. It carries out the reaction Endonucleolytic cleavage at a junction such as a reciprocal single-stranded crossover between two homologous DNA duplexes (Holliday junction).. Its function is as follows. The RuvA-RuvB-RuvC complex processes Holliday junction (HJ) DNA during genetic recombination and DNA repair. Endonuclease that resolves HJ intermediates. Cleaves cruciform DNA by making single-stranded nicks across the HJ at symmetrical positions within the homologous arms, yielding a 5'-phosphate and a 3'-hydroxyl group; requires a central core of homology in the junction. The consensus cleavage sequence is 5'-(A/T)TT(C/G)-3'. Cleavage occurs on the 3'-side of the TT dinucleotide at the point of strand exchange. HJ branch migration catalyzed by RuvA-RuvB allows RuvC to scan DNA until it finds its consensus sequence, where it cleaves and resolves the cruciform DNA. This is Crossover junction endodeoxyribonuclease RuvC from Geobacter sulfurreducens (strain ATCC 51573 / DSM 12127 / PCA).